We begin with the raw amino-acid sequence, 101 residues long: Small ribosomal subunit protein uS14 (101 aa).

The protein belongs to the universal ribosomal protein uS14 family. As to quaternary structure, part of the 30S ribosomal subunit. Contacts proteins S3 and S10.

Functionally, binds 16S rRNA, required for the assembly of 30S particles and may also be responsible for determining the conformation of the 16S rRNA at the A site. In Chlamydia trachomatis serovar L2 (strain ATCC VR-902B / DSM 19102 / 434/Bu), this protein is Small ribosomal subunit protein uS14.